The chain runs to 692 residues: Elongation factor G (692 aa).

The tr-type G domain maps to 8–283; the sequence is NRIRNIGIAA…AVIDYLPAPT (276 aa). GTP-binding positions include 17–24, 81–85, and 135–138; these read AHIDAGKT, DTPGH, and NKMD.

It belongs to the TRAFAC class translation factor GTPase superfamily. Classic translation factor GTPase family. EF-G/EF-2 subfamily.

It is found in the cytoplasm. Its function is as follows. Catalyzes the GTP-dependent ribosomal translocation step during translation elongation. During this step, the ribosome changes from the pre-translocational (PRE) to the post-translocational (POST) state as the newly formed A-site-bound peptidyl-tRNA and P-site-bound deacylated tRNA move to the P and E sites, respectively. Catalyzes the coordinated movement of the two tRNA molecules, the mRNA and conformational changes in the ribosome. The sequence is that of Elongation factor G from Helicobacter pylori (strain HPAG1).